The sequence spans 348 residues: Dihydroorotase (348 aa).

Zn(2+)-binding residues include histidine 17 and histidine 19. Residues 19–21 (HLR) and asparagine 45 contribute to the substrate site. The Zn(2+) site is built by lysine 103, histidine 140, and histidine 178. N6-carboxylysine is present on lysine 103. Histidine 140 contributes to the substrate binding site. Leucine 223 serves as a coordination point for substrate. Aspartate 251 contributes to the Zn(2+) binding site. Aspartate 251 is an active-site residue. The substrate site is built by histidine 255 and alanine 267.

This sequence belongs to the metallo-dependent hydrolases superfamily. DHOase family. Class II DHOase subfamily. In terms of assembly, homodimer. Zn(2+) serves as cofactor.

It catalyses the reaction (S)-dihydroorotate + H2O = N-carbamoyl-L-aspartate + H(+). The protein operates within pyrimidine metabolism; UMP biosynthesis via de novo pathway; (S)-dihydroorotate from bicarbonate: step 3/3. Catalyzes the reversible cyclization of carbamoyl aspartate to dihydroorotate. In Salmonella typhi, this protein is Dihydroorotase.